A 453-amino-acid chain; its full sequence is Methionine aminopeptidase 2-1 (453 aa).

Residues 1 to 12 (MGSKTPDGHRQS) show a composition bias toward basic and acidic residues. The tract at residues 1 to 101 (MGSKTPDGHR…TTPPRVPLST (101 aa)) is disordered. Positions 46–57 (GEDDDDDDENEE) are enriched in acidic residues. Residues 67 to 82 (KKKKRKKSKKKNKKSK) are compositionally biased toward basic residues. Histidine 210 lines the substrate pocket. Aspartate 231, aspartate 242, and histidine 306 together coordinate a divalent metal cation. Substrate is bound at residue histidine 314. A divalent metal cation is bound by residues glutamate 339 and glutamate 434.

This sequence belongs to the peptidase M24A family. Methionine aminopeptidase eukaryotic type 2 subfamily. The cofactor is Co(2+). Requires Zn(2+) as cofactor. Mn(2+) serves as cofactor. It depends on Fe(2+) as a cofactor.

It localises to the cytoplasm. It carries out the reaction Release of N-terminal amino acids, preferentially methionine, from peptides and arylamides.. Functionally, cotranslationally removes the N-terminal methionine from nascent proteins. The N-terminal methionine is often cleaved when the second residue in the primary sequence is small and uncharged (Met-Ala-, Cys, Gly, Pro, Ser, Thr, or Val). This Aspergillus terreus (strain NIH 2624 / FGSC A1156) protein is Methionine aminopeptidase 2-1.